Here is a 76-residue protein sequence, read N- to C-terminus: Esculentin-2MT1 (76 aa).

Positions 1 to 22 are cleaved as a signal peptide; it reads MFTMKKPLLLLFFLGTISLSLC. A propeptide spanning residues 23–37 is cleaved from the precursor; it reads EEERNADEDDGEKEV. Cys70 and Cys76 are oxidised to a cystine.

It belongs to the frog skin active peptide (FSAP) family. Esculentin subfamily. Expressed by the skin glands.

It is found in the secreted. Antimicrobial peptide. The polypeptide is Esculentin-2MT1 (Amolops mantzorum (Sichuan torrent frog)).